Reading from the N-terminus, the 55-residue chain is MAKATTIKIKLLSTADTGFFYVTTKNSRTMTDKMTKTKYDPVAKKHVEFKETKIK.

It belongs to the bacterial ribosomal protein bL33 family.

The chain is Large ribosomal subunit protein bL33 from Rhizobium johnstonii (strain DSM 114642 / LMG 32736 / 3841) (Rhizobium leguminosarum bv. viciae).